The following is a 35-amino-acid chain: Alpha-amanitin proprotein 1 (35 aa).

The propeptide occupies 1–10 (MFDTNATRLP). Ile11 bears the (3R,4R)-4,5-dihydroxyisoleucine; in form alpha-amanitin mark. Ile11 carries the (3R,4S)-4-hydroxyisoleucine; in form gamma-amanitin modification. A cross-link (cyclopeptide (Ile-Pro)) is located at residues 11–18 (IWGIGCNP). The 2'-cysteinyl-6'-hydroxytryptophan sulfoxide (Trp-Cys) cross-link spans 12–16 (WGIGC). A 4-hydroxyproline modification is found at Pro18. Residues 19–35 (WTAEHVDQTLASGNDIC) constitute a propeptide that is removed on maturation.

Belongs to the MSDIN fungal toxin family. In terms of processing, processed by the macrocyclase-peptidase enzyme POPB to yield a toxic bicyclic octapeptide. POPB first removes 10 residues from the N-terminus. Conformational trapping of the remaining peptide forces the enzyme to release this intermediate rather than proceed to macrocyclization. The enzyme rebinds the remaining peptide in a different conformation and catalyzes macrocyclization of the N-terminal 8 residues.

Functionally, major toxin belonging to the bicyclic octapeptides amatoxins that acts by binding non-competitively to RNA polymerase II and greatly slowing the elongation of transcripts from target promoters. The protein is Alpha-amanitin proprotein 1 of Galerina marginata (strain CBS 339.88).